Consider the following 509-residue polypeptide: Steroid 17-alpha-hydroxylase/17,20 lyase (509 aa).

C440 is a heme binding site.

This sequence belongs to the cytochrome P450 family. The cofactor is heme.

Its subcellular location is the endoplasmic reticulum membrane. It localises to the microsome membrane. The enzyme catalyses a C21-steroid + reduced [NADPH--hemoprotein reductase] + O2 = a 17alpha-hydroxy-C21-steroid + oxidized [NADPH--hemoprotein reductase] + H2O + H(+). It catalyses the reaction progesterone + reduced [NADPH--hemoprotein reductase] + O2 = 17alpha-hydroxyprogesterone + oxidized [NADPH--hemoprotein reductase] + H2O + H(+). It carries out the reaction pregnenolone + reduced [NADPH--hemoprotein reductase] + O2 = 17alpha-hydroxypregnenolone + oxidized [NADPH--hemoprotein reductase] + H2O + H(+). The catalysed reaction is 17alpha-hydroxyprogesterone + reduced [NADPH--hemoprotein reductase] + O2 = androst-4-ene-3,17-dione + acetate + oxidized [NADPH--hemoprotein reductase] + H2O + 2 H(+). The enzyme catalyses 17alpha-hydroxyprogesterone + reduced [NADPH--hemoprotein reductase] + O2 = 16alpha,17alpha-dihydroxyprogesterone + oxidized [NADPH--hemoprotein reductase] + H2O + H(+). It catalyses the reaction 16alpha,17alpha-dihydroxyprogesterone + reduced [NADPH--hemoprotein reductase] + O2 = 6beta,16alpha,17alpha-trihydroxyprogesterone + oxidized [NADPH--hemoprotein reductase] + H2O + H(+). It carries out the reaction 17alpha-hydroxypregnenolone + reduced [NADPH--hemoprotein reductase] + O2 = 3beta-hydroxyandrost-5-en-17-one + acetate + oxidized [NADPH--hemoprotein reductase] + H2O + 2 H(+). The catalysed reaction is 16alpha,17alpha-dihydroxypregnenolone + reduced [NADPH--hemoprotein reductase] + O2 = 3beta,16alpha-dihydroxy-androst-5-en-17-one + acetate + oxidized [NADPH--hemoprotein reductase] + H2O + 2 H(+). The enzyme catalyses 3beta-hydroxyandrost-5-en-17-one + reduced [NADPH--hemoprotein reductase] + O2 = 3beta,16alpha-dihydroxy-androst-5-en-17-one + oxidized [NADPH--hemoprotein reductase] + H2O + H(+). It catalyses the reaction androst-4-ene-3,17-dione + reduced [NADPH--hemoprotein reductase] + O2 = 16alpha-hydroxyandrost-4-ene-3,17-dione + oxidized [NADPH--hemoprotein reductase] + H2O + H(+). It functions in the pathway steroid hormone biosynthesis. Its pathway is steroid biosynthesis; glucocorticoid biosynthesis. With respect to regulation, regulated predominantly by intracellular cAMP levels. The 17,20-lyase activity is stimulated by cytochrome b5, which acts as an allosteric effector increasing the Vmax of the lyase activity. Its function is as follows. A cytochrome P450 monooxygenase involved in corticoid and androgen biosynthesis. Catalyzes 17-alpha hydroxylation of C21 steroids, which is common for both pathways. A second oxidative step, required only for androgen synthesis, involves an acyl-carbon cleavage. The 17-alpha hydroxy intermediates, as part of adrenal glucocorticoids biosynthesis pathway, are precursors of cortisol. Hydroxylates steroid hormones, pregnenolone and progesterone to form 17-alpha hydroxy metabolites, followed by the cleavage of the C17-C20 bond to form C19 steroids, dehydroepiandrosterone (DHEA) and androstenedione. Has 16-alpha hydroxylase activity. Catalyzes 16-alpha hydroxylation of 17-alpha hydroxy pregnenolone, followed by the cleavage of the C17-C20 bond to form 16-alpha-hydroxy DHEA. Also 16-alpha hydroxylates androgens, relevant for estriol synthesis. Mechanistically, uses molecular oxygen inserting one oxygen atom into a substrate, and reducing the second into a water molecule, with two electrons provided by NADPH via cytochrome P450 reductase (CPR; NADPH-ferrihemoprotein reductase). The polypeptide is Steroid 17-alpha-hydroxylase/17,20 lyase (Cyp17a1) (Peromyscus leucopus (White-footed mouse)).